An 87-amino-acid polypeptide reads, in one-letter code: Transcription factor ILI4 (87 aa).

One can recognise a bHLH domain in the interval 1 to 54 (MSSRRSSRSSVSEEEINELISKLQSLLPSSRRRGANQASTTKLLKETCSYIKSL).

This sequence belongs to the bHLH protein family. In terms of assembly, interacts with LO9-177. Expressed in phloem of leaf blades and sheaths, lamina joints, filaments before anthesis, vasculare bundles of the ovule, lemma and palea, and embryos.

The protein localises to the cytoplasm. Atypical and probable non DNA-binding bHLH transcription factor that acts as a positive regulator of brassinosteroid (BR) response. Controls lamina inclination by participating in two BR signaling pathways involving BRI1 and RGA1. Involved in the RLI1-dependent modulation of leaf inclination by promoting lamina joint cell elongation, especially in response to phosphate (Pi) availability. This Oryza sativa subsp. japonica (Rice) protein is Transcription factor ILI4 (ILI4).